A 459-amino-acid chain; its full sequence is uncharacterized protein (459 aa).

Helical transmembrane passes span 53 to 75 and 111 to 133; these read IPLL…GLTL and ARIA…CLCA. Residues 174–196 form a disordered region; that stretch reads HLDNPSAPHPSENPQSRAHPKQN.

Its subcellular location is the cell membrane. This is an uncharacterized protein from Treponema pallidum (strain Nichols).